The sequence spans 406 residues: MTQLETRTEPMIINFGPHHPSMHGVLRLVVTLDGEDVVDCEPVIGYLHRGMEKIAESRTAITFVPYVSRWDYAAGMFNEAITVNATEKLMDLEIPRRASYIRVLMLELNRIANHLLWLGPFLADVGAQTPFFYIFREREMIYDLWEAVTGQRLINNNYFRVGGVACDLPFGWLDKCEDFCDWFGPKIDEYEQLITNNPIFRRRIEGLGVISREQAINWSLSGPMLRASGVPWDLRKVDHYECYDDFDWDIAWAKEGDCYARYLVRIEEMRQSLRILKQALKMIPGGPTENLEAQCGFDSTDTNQDLDKKRSVATGEVSGNEYTIGPKKINLNKCPEGELYCRVESGKGELGVFIISNGEANPWRWKIRAADFNNLQILPHILTGAKVADVMAILGSIDVIMGSVDR.

The protein belongs to the complex I 49 kDa subunit family. In terms of assembly, NDH is composed of at least 16 different subunits, 5 of which are encoded in the nucleus.

The protein localises to the plastid. It localises to the organellar chromatophore thylakoid membrane. It catalyses the reaction a quinone + NADH + H(+) = a quinol + NAD(+). In terms of biological role, NDH shuttles electrons from NAD(P)H:plastoquinone, via FMN and iron-sulfur (Fe-S) centers, to quinones in the photosynthetic chain and possibly in a chloroplast respiratory chain. The immediate electron acceptor for the enzyme in this species is believed to be plastoquinone. Couples the redox reaction to proton translocation, and thus conserves the redox energy in a proton gradient. In Paulinella chromatophora, this protein is NAD(P)H-quinone oxidoreductase subunit H, organellar chromatophore.